Reading from the N-terminus, the 262-residue chain is MIHPSAKIHPTALIEEGAVIGEDVFIGPFCIIEGTVEIKARTVLKSHVVVRGDTVIGEDNEIYQFTSIGEVNQDLKYKGEATKTIIGNSNKIREHVTIHRGTIQGCGVTAIGNNNLLMINVHVAHDCQIKNNCILANNATLAGHVELDDFVIVGGMSAIHQFVIVGAHVMLGGGSMVSQDVPPYVMAQGNHARPFGVNLEGLKRRGFDKPTMHVIRNIYKMLYRSGKTLEEVLPEIEQIAETDSAISFFVEFFKRSTRGIIR.

Belongs to the transferase hexapeptide repeat family. LpxA subfamily. As to quaternary structure, homotrimer.

It is found in the cytoplasm. It carries out the reaction a (3R)-hydroxyacyl-[ACP] + UDP-N-acetyl-alpha-D-glucosamine = a UDP-3-O-[(3R)-3-hydroxyacyl]-N-acetyl-alpha-D-glucosamine + holo-[ACP]. It participates in glycolipid biosynthesis; lipid IV(A) biosynthesis; lipid IV(A) from (3R)-3-hydroxytetradecanoyl-[acyl-carrier-protein] and UDP-N-acetyl-alpha-D-glucosamine: step 1/6. In terms of biological role, involved in the biosynthesis of lipid A, a phosphorylated glycolipid that anchors the lipopolysaccharide to the outer membrane of the cell. The sequence is that of Acyl-[acyl-carrier-protein]--UDP-N-acetylglucosamine O-acyltransferase from Haemophilus influenzae (strain ATCC 51907 / DSM 11121 / KW20 / Rd).